The sequence spans 166 residues: Thioredoxin, mitochondrial (166 aa).

The N-terminal 59 residues, 1-59 (MAQRLLLGRFLTSVISRKPPQGVWASLTSKTLQTPQYNAGGLTVMPSPARTVHTTRVCL), are a transit peptide targeting the mitochondrion. Residues 61–166 (TFNVQDGPDF…LEAFLKKLIG (106 aa)) enclose the Thioredoxin domain. Residues Cys90 and Cys93 each act as nucleophile in the active site. Cys90 and Cys93 form a disulfide bridge. Lys152 carries the post-translational modification N6-acetyllysine; alternate. An N6-succinyllysine; alternate modification is found at Lys152.

This sequence belongs to the thioredoxin family. As to quaternary structure, monomer.

Its subcellular location is the mitochondrion. Functionally, important for the control of mitochondrial reactive oxygen species homeostasis, apoptosis regulation and cell viability. Is involved in various redox reactions including the reduction of protein disulfide bonds, through the reversible oxidation of its active center dithiol to a disulfide. This is Thioredoxin, mitochondrial (Txn2) from Mus musculus (Mouse).